Here is a 203-residue protein sequence, read N- to C-terminus: Urease accessory protein UreG (203 aa).

Residue 14–21 coordinates GTP; that stretch reads GPVGSGKT.

It belongs to the SIMIBI class G3E GTPase family. UreG subfamily. As to quaternary structure, homodimer. UreD, UreF and UreG form a complex that acts as a GTP-hydrolysis-dependent molecular chaperone, activating the urease apoprotein by helping to assemble the nickel containing metallocenter of UreC. The UreE protein probably delivers the nickel.

Its subcellular location is the cytoplasm. In terms of biological role, facilitates the functional incorporation of the urease nickel metallocenter. This process requires GTP hydrolysis, probably effectuated by UreG. This chain is Urease accessory protein UreG, found in Rhizobium meliloti (strain 1021) (Ensifer meliloti).